The sequence spans 565 residues: Calcium-dependent protein kinase 21 (565 aa).

Residue glycine 2 is the site of N-myristoyl glycine attachment. A disordered region spans residues 28 to 55 (PVPDAEAASPRKDGVDGDGDDVRGGGGG). A compositionally biased stretch (basic and acidic residues) spans 36–50 (SPRKDGVDGDGDDVR). Residues 77–358 (YVLGKELGRG…AKQVLEHPWL (282 aa)) enclose the Protein kinase domain. Residues 83-91 (LGRGEFGVT) and lysine 106 contribute to the ATP site. Catalysis depends on aspartate 224, which acts as the Proton acceptor. The interval 364–394 (APNVSLGDAVRARLQQFSAMNKFKKKALGVV) is autoinhibitory domain. EF-hand domains follow at residues 401–436 (EEVDKYVQMFHHMDKDKNGHLSLDELLEGLHINGQP), 437–472 (VPEPEIRMLLEAADTDGNGTLDCDEFVTVSVHLKKM), 473–500 (SNDEYLAAAFNYFDKDGSGFIELDELRE), and 504–539 (PNEQAILEILRDVDTDKDGRISYQEFELMMKSGADW). Ca(2+)-binding residues include aspartate 414, aspartate 416, asparagine 418, histidine 420, glutamate 425, aspartate 450, aspartate 452, asparagine 454, threonine 456, glutamate 461, aspartate 486, aspartate 488, serine 490, glutamate 497, aspartate 517, aspartate 519, aspartate 521, arginine 523, and glutamate 528.

It belongs to the protein kinase superfamily. Ser/Thr protein kinase family. CDPK subfamily. In terms of tissue distribution, expressed in spikelets and developing seeds.

Its subcellular location is the membrane. The catalysed reaction is L-seryl-[protein] + ATP = O-phospho-L-seryl-[protein] + ADP + H(+). The enzyme catalyses L-threonyl-[protein] + ATP = O-phospho-L-threonyl-[protein] + ADP + H(+). Activated by calcium. Autophosphorylation may play an important role in the regulation of the kinase activity. In terms of biological role, may play a role in signal transduction pathways that involve calcium as a second messenger. Functions in signal transduction pathways that positively regulate responses to abscisic acid (ABA) and salt stress. This is Calcium-dependent protein kinase 21 from Oryza sativa subsp. japonica (Rice).